The chain runs to 425 residues: Acyl-lipid (8-3)-desaturase (425 aa).

A disordered region spans residues 1–25 (MPPRDSYSYAAPPSAQLHEVDTPQE). The Cytochrome b5 heme-binding domain occupies 18 to 93 (HEVDTPQEHD…SRPVHKGYSP (76 aa)). Heme-binding residues include His47 and His69. The chain crosses the membrane as a helical span at residues 134-154 (VAGAALIWHGYTFAGIAMLGV). The Histidine box-1 motif lies at 164 to 168 (HEGGH). The helical transmembrane segment at 175–197 (IAFDRAIQVACYGLGCGMSGAWW) threads the bilayer. A Histidine box-2 motif is present at residues 201 to 206 (HNKHHA). Helical transmembrane passes span 241 to 261 (WLSM…ALGW) and 297 to 317 (GAGY…MYIF). Positions 365–369 (QIEHH) match the Histidine box-3 motif.

It belongs to the fatty acid desaturase type 1 family. It depends on Fe(2+) as a cofactor.

The protein resides in the membrane. The enzyme catalyses an (8Z,11Z,14Z)-icosatrienoyl-containing glycerolipid + 2 Fe(II)-[cytochrome b5] + O2 + 2 H(+) = (5Z,8Z,11Z,14Z)-eicosatetraenoyl-containing glycerolipid + 2 Fe(III)-[cytochrome b5] + 2 H2O. It carries out the reaction an (8Z,11Z,14Z,17Z)-eicosatetraenoyl-containing glycerolipid + 2 Fe(II)-[cytochrome b5] + O2 + 2 H(+) = a (5Z,8Z,11Z,14Z,17Z)-eicosapentaenoyl-containing glycerolipid + 2 Fe(III)-[cytochrome b5] + 2 H2O. Fatty acid desaturase that introduces a cis double bond at the 5-position in 20-carbon polyunsaturated fatty acids incorporated in a glycerolipid that contain a Delta(8) double bond. The polypeptide is Acyl-lipid (8-3)-desaturase (Rebecca salina (Marine microalga)).